Consider the following 292-residue polypeptide: ATP synthase gamma chain (292 aa).

This sequence belongs to the ATPase gamma chain family. F-type ATPases have 2 components, CF(1) - the catalytic core - and CF(0) - the membrane proton channel. CF(1) has five subunits: alpha(3), beta(3), gamma(1), delta(1), epsilon(1). CF(0) has three main subunits: a, b and c.

Its subcellular location is the cell inner membrane. In terms of biological role, produces ATP from ADP in the presence of a proton gradient across the membrane. The gamma chain is believed to be important in regulating ATPase activity and the flow of protons through the CF(0) complex. This Chlorobaculum parvum (strain DSM 263 / NCIMB 8327) (Chlorobium vibrioforme subsp. thiosulfatophilum) protein is ATP synthase gamma chain.